The sequence spans 92 residues: MSRSLKKGPFVAYHLLKKINKMNADGKKDVITTWSRSSTILPNMIGFTIAVYNGKQHVPVFISDQLVGHKLGEFVSTRTFKSHIKADKKTKR.

This sequence belongs to the universal ribosomal protein uS19 family.

The protein localises to the plastid. The protein resides in the chloroplast. In terms of biological role, protein S19 forms a complex with S13 that binds strongly to the 16S ribosomal RNA. In Thalassiosira pseudonana (Marine diatom), this protein is Small ribosomal subunit protein uS19c.